Here is a 72-residue protein sequence, read N- to C-terminus: Alpha-mammal toxin Bot3 (72 aa).

Positions L1–S8 are cleaved as a signal peptide. One can recognise an LCN-type CS-alpha/beta domain in the interval K10 to N72. 4 disulfide bridges follow: C20/C71, C24/C44, C30/C54, and C34/C56. N72 is subject to Asparagine amide.

This sequence belongs to the long (4 C-C) scorpion toxin superfamily. Sodium channel inhibitor family. Alpha subfamily. In terms of processing, when the toxin is not amidated, there are 75% loss of toxicity to mice, and total incapacity to bind rat brain synaptosomes. As to expression, expressed by the venom gland.

Its subcellular location is the secreted. Alpha toxins bind voltage-independently at site-3 of sodium channels (Nav) and inhibit the inactivation of the activated channels, thereby blocking neuronal transmission. Is active against mammals and binds with high affinity to rat brain synaptosomes. The sequence is that of Alpha-mammal toxin Bot3 from Buthus occitanus tunetanus (Common European scorpion).